A 107-amino-acid chain; its full sequence is uncharacterized protein (107 aa).

A helical transmembrane segment spans residues 12–32 (IILNIFLALLLVYFIFHCIYG).

The protein localises to the membrane. This is an uncharacterized protein from Rickettsia prowazekii (strain Madrid E).